The primary structure comprises 312 residues: GDP-L-fucose synthase (312 aa).

An NADP(+)-binding site is contributed by 11 to 17 (GGRGMVG). Tyr136 serves as the catalytic Proton donor/acceptor. Positions 140 and 179 each coordinate NADP(+). Substrate-binding residues include Lys187, Trp202, and Arg209.

The protein belongs to the NAD(P)-dependent epimerase/dehydratase family. Fucose synthase subfamily.

It catalyses the reaction GDP-beta-L-fucose + NADP(+) = GDP-4-dehydro-alpha-D-rhamnose + NADPH + H(+). It participates in nucleotide-sugar biosynthesis; GDP-L-fucose biosynthesis via de novo pathway; GDP-L-fucose from GDP-alpha-D-mannose: step 2/2. Functionally, catalyzes the two-step NADP-dependent conversion of GDP-4-dehydro-6-deoxy-D-mannose to GDP-fucose, involving an epimerase and a reductase reaction. This is GDP-L-fucose synthase from Azorhizobium caulinodans (strain ATCC 43989 / DSM 5975 / JCM 20966 / LMG 6465 / NBRC 14845 / NCIMB 13405 / ORS 571).